We begin with the raw amino-acid sequence, 187 residues long: Photosystem I assembly protein Ycf4 (187 aa).

Transmembrane regions (helical) follow at residues 25 to 45 (YLWA…GISS) and 69 to 89 (MSFY…TVIW).

It belongs to the Ycf4 family.

It is found in the cellular thylakoid membrane. Its function is as follows. Seems to be required for the assembly of the photosystem I complex. The protein is Photosystem I assembly protein Ycf4 of Trichodesmium erythraeum (strain IMS101).